We begin with the raw amino-acid sequence, 91 residues long: Small ribosomal subunit protein uS19 (91 aa).

The protein belongs to the universal ribosomal protein uS19 family.

In terms of biological role, protein S19 forms a complex with S13 that binds strongly to the 16S ribosomal RNA. This Pseudoalteromonas atlantica (strain T6c / ATCC BAA-1087) protein is Small ribosomal subunit protein uS19.